The chain runs to 337 residues: Protein MICROTUBULE BINDING PROTEIN 2C (337 aa).

Residues 80-147 (RGSMTYTKMP…STSSLTEKDR (68 aa)) form a disordered region. The segment covering 89 to 103 (PSRESLYKKTSEVKG) has biased composition (basic and acidic residues). The segment covering 120–142 (KNVSSSQDGYAENFSTPSSTSSL) has biased composition (polar residues). Coiled-coil stretches lie at residues 143 to 194 (TEKD…MKKD), 223 to 250 (VEKLEWEAMTSSKKVERLQEDLDLLQGE), and 294 to 314 (LQKMEAAREAYIAAVAAAKEN).

It belongs to the microtubule binding protein 2C family. In terms of assembly, interacts with KN-1. Binds to tobacco mosaic virus movement protein (TMV-MP) at microtubules. In terms of tissue distribution, constitutively expressed in leaves.

It is found in the cytoplasm. It localises to the cytoskeleton. Prevents homeodomain proteins (e.g. STM) association to plasmodesmata and, consequently, cell-to-cell transport. Binds to RNA. Alters KN1 RNA-binding capacity. Regulates cytoskeleton (e.g. actin) organization that determinates cell shape. Interferes with cell-to-cell transport of tobacco mosaic virus movement protein (TMV-MP) by mediating its accumulation at microtubules, thus interfering with cell-to-cell virus movement. This is Protein MICROTUBULE BINDING PROTEIN 2C from Nicotiana tabacum (Common tobacco).